A 159-amino-acid polypeptide reads, in one-letter code: 2-C-methyl-D-erythritol 2,4-cyclodiphosphate synthase (159 aa).

Positions 10 and 12 each coordinate a divalent metal cation. Residues 10-12 and 36-37 contribute to the 4-CDP-2-C-methyl-D-erythritol 2-phosphate site; these read DVH and HS. His44 provides a ligand contact to a divalent metal cation. 4-CDP-2-C-methyl-D-erythritol 2-phosphate contacts are provided by residues 58–60, 63–67, 102–108, 134–137, Phe141, 141–144, and Arg144; these read DIG, FPDTD, AQAPKMA, TTTE, and FTGR.

This sequence belongs to the IspF family. In terms of assembly, homotrimer. Requires a divalent metal cation as cofactor.

It carries out the reaction 4-CDP-2-C-methyl-D-erythritol 2-phosphate = 2-C-methyl-D-erythritol 2,4-cyclic diphosphate + CMP. It functions in the pathway isoprenoid biosynthesis; isopentenyl diphosphate biosynthesis via DXP pathway; isopentenyl diphosphate from 1-deoxy-D-xylulose 5-phosphate: step 4/6. Involved in the biosynthesis of isopentenyl diphosphate (IPP) and dimethylallyl diphosphate (DMAPP), two major building blocks of isoprenoid compounds. Catalyzes the conversion of 4-diphosphocytidyl-2-C-methyl-D-erythritol 2-phosphate (CDP-ME2P) to 2-C-methyl-D-erythritol 2,4-cyclodiphosphate (ME-CPP) with a corresponding release of cytidine 5-monophosphate (CMP). In Shewanella oneidensis (strain ATCC 700550 / JCM 31522 / CIP 106686 / LMG 19005 / NCIMB 14063 / MR-1), this protein is 2-C-methyl-D-erythritol 2,4-cyclodiphosphate synthase.